The following is a 542-amino-acid chain: Membrane protein insertase YidC (542 aa).

Transmembrane regions (helical) follow at residues 7-27 (LLVM…QQDF), 338-358 (FALL…IIGV), 417-437 (MGGC…YWTF), 455-475 (LSAQ…MFLL), and 494-514 (FMPV…VLYW).

Belongs to the OXA1/ALB3/YidC family. Type 1 subfamily. In terms of assembly, interacts with the Sec translocase complex via SecD. Specifically interacts with transmembrane segments of nascent integral membrane proteins during membrane integration.

It is found in the cell inner membrane. Its function is as follows. Required for the insertion and/or proper folding and/or complex formation of integral membrane proteins into the membrane. Involved in integration of membrane proteins that insert both dependently and independently of the Sec translocase complex, as well as at least some lipoproteins. Aids folding of multispanning membrane proteins. In Actinobacillus pleuropneumoniae serotype 3 (strain JL03), this protein is Membrane protein insertase YidC.